The following is a 360-amino-acid chain: Venom serine protease Bi-VSP (360 aa).

The signal sequence occupies residues 1–26 (MTGSKMLFACLALIAFLHPLVHVASA). A propeptide spanning residues 27 to 113 (QECTTPNNKA…CGFSNVSHTR (87 aa)) is cleaved from the precursor. One can recognise a Clip domain in the interval 28–79 (ECTTPNNKAGKCLGIRVCKPLLEMLQTQGHAAADFLRQSVCKYENNNPIVCC). 7 cysteine pairs are disulfide-bonded: Cys-29–Cys-78, Cys-39–Cys-68, Cys-45–Cys-79, Cys-104–Cys-230, Cys-147–Cys-163, Cys-278–Cys-296, and Cys-307–Cys-335. Asn-108 carries N-linked (GlcNAc...) asparagine glycosylation. One can recognise a Peptidase S1 domain in the interval 114 to 360 (VVGGKPAVLG…LDDFILPAMQ (247 aa)). His-162 functions as the Charge relay system in the catalytic mechanism. Ca(2+) contacts are provided by Asp-176, Asn-178, Arg-181, and Asp-184. Catalysis depends on Asp-210, which acts as the Charge relay system. The Charge relay system role is filled by Ser-311.

It belongs to the peptidase S1 family. CLIP subfamily. Expressed by the venom gland.

It is found in the secreted. In terms of biological role, multifunctional venom serine protease. In insects, it acts as an arthropod prophenoloxidase-activating factor, thereby triggering the phenoloxidase cascade. When injected into larvae, it induces a lethal melanization response in target insects by modulating the innate immune response. In mammals, it converts fibrinogen into fibrin, activates prothrombin, and also degrades fibrin. In mammal, it may act in a cooperative manner with the serine protease inhibitor Bi-KTI (AC G3LH89) to promote the spread of bee venom under anti-bleeding conditions. The chain is Venom serine protease Bi-VSP from Bombus ignitus (Bumblebee).